A 735-amino-acid chain; its full sequence is Peroxisomal multifunctional enzyme type 2 (735 aa).

A (3R)-hydroxyacyl-CoA dehydrogenase region spans residues 1 to 305; sequence MASPLRFDGR…VEVLHKVDSE (305 aa). NAD(+) is bound by residues 13–37, Leu21, and Asp40; that span reads LVTG…ALVI. Lys46 is subject to N6-acetyllysine; alternate. N6-succinyllysine; alternate is present on Lys46. Ser52 carries the phosphoserine modification. 2 positions are modified to N6-succinyllysine: Lys57 and Lys68. 75–76 contacts NAD(+); sequence SV. Residue Lys84 is modified to N6-succinyllysine. Asn99 contributes to the NAD(+) binding site. Substrate is bound at residue Ser151. Tyr164 functions as the Proton acceptor in the catalytic mechanism. Residues 164–168 and 196–199 contribute to the NAD(+) site; these read YSAAK and AGSR. Thr265 carries the post-translational modification Phosphothreonine. N6-succinyllysine is present on Lys275. Ser304 and Ser308 each carry phosphoserine. The segment at 321 to 621 is enoyl-CoA hydratase 2; it reads SGFVGAVGHK…TQTPSEGGEL (301 aa). N6-succinyllysine is present on Lys355. 405 to 406 is a binding site for (3R)-3-hydroxydecanoyl-CoA; it reads HG. An N6-succinyllysine modification is found at Lys423. Residues Lys434, 509–514, Gly532, and Phe562 each bind (3R)-3-hydroxydecanoyl-CoA; that span reads DWNPLH. One can recognise a MaoC-like domain in the interval 483 to 599; it reads VPNRPPDAVL…HETGDVVISN (117 aa). Lys564 is subject to N6-acetyllysine. N6-succinyllysine occurs at positions 578 and 662. The 113-residue stretch at 623–735 folds into the SCP2 domain; sequence SALVFGEIGR…QMILKDYAKL (113 aa). The residue at position 668 (Lys668) is an N6-acetyllysine. Gln705 contributes to the substrate binding site. The residue at position 706 (Lys706) is an N6-acetyllysine. A substrate-binding site is contributed by Gln723. At Lys724 the chain carries N6-succinyllysine. The short motif at 733–735 is the Microbody targeting signal element; that stretch reads AKL.

It belongs to the short-chain dehydrogenases/reductases (SDR) family. In terms of assembly, homodimer. As to expression, present in many tissues with highest concentrations in liver and kidney.

Its subcellular location is the peroxisome. It carries out the reaction a (3R)-3-hydroxyacyl-CoA + NAD(+) = a 3-oxoacyl-CoA + NADH + H(+). The enzyme catalyses (24R,25R)-3alpha,7alpha,12alpha,24-tetrahydroxy-5beta-cholestan-26-oyl-CoA = (24E)-3alpha,7alpha,12alpha-trihydroxy-5beta-cholest-24-en-26-oyl-CoA + H2O. It catalyses the reaction a (3R)-3-hydroxyacyl-CoA = a (2E)-enoyl-CoA + H2O. The catalysed reaction is (2E)-octenoyl-CoA + H2O = (3R)-hydroxyoctanoyl-CoA. It carries out the reaction (3R)-hydroxyoctanoyl-CoA + NAD(+) = 3-oxooctanoyl-CoA + NADH + H(+). The enzyme catalyses (3R)-hydroxyhexadecanoyl-CoA + NAD(+) = 3-oxohexadecanoyl-CoA + NADH + H(+). It catalyses the reaction (2E)-hexadecenedioyl-CoA + H2O = (3R)-hydroxyhexadecanedioyl-CoA. The catalysed reaction is (3R)-hydroxyhexadecanedioyl-CoA + NAD(+) = 3-oxohexadecanedioyl-CoA + NADH + H(+). It carries out the reaction (3R)-hydroxyhexadecanoyl-CoA = (2E)-hexadecenoyl-CoA + H2O. The enzyme catalyses (3R)-3-hydroxydecanoyl-CoA = (2E)-decenoyl-CoA + H2O. It catalyses the reaction (3R)-3-hydroxydecanoyl-CoA + NAD(+) = 3-oxodecanoyl-CoA + NADH + H(+). The catalysed reaction is (24R,25R)-3alpha,7alpha,12alpha,24-tetrahydroxy-5beta-cholestan-26-oyl-CoA + NAD(+) = 3alpha,7alpha,12alpha-trihydroxy-24-oxo-5beta-cholestan-26-oyl-CoA + NADH + H(+). It functions in the pathway lipid metabolism; fatty acid beta-oxidation. Functionally, bifunctional enzyme acting on the peroxisomal fatty acid beta-oxidation pathway. Catalyzes two of the four reactions in fatty acid degradation: hydration of 2-enoyl-CoA (trans-2-enoyl-CoA) to produce (3R)-3-hydroxyacyl-CoA, and dehydrogenation of (3R)-3-hydroxyacyl-CoA to produce 3-ketoacyl-CoA (3-oxoacyl-CoA), which is further metabolized by SCPx. Can use straight-chain and branched-chain fatty acids, as well as bile acid intermediates as substrates. In Mus musculus (Mouse), this protein is Peroxisomal multifunctional enzyme type 2.